Reading from the N-terminus, the 685-residue chain is E3 ubiquitin ligase Rnf157 (685 aa).

The N-myristoyl glycine moiety is linked to residue Gly2. Residues 276 to 315 (ECVVCLSDVRDTLILPCRHLCLCNTCADTLRYQANNCPIC) form an RING-type zinc finger. Residues 329 to 332 (RKKL) carry the D-box 1 motif. Disordered regions lie at residues 339–361 (SFNP…ENIP), 433–584 (LSKS…AGEQ), and 650–672 (LGGR…EASA). The segment covering 434–443 (SKSISQNSSV) has biased composition (low complexity). Polar residues predominate over residues 478–537 (ESENLTLSSSGAVDQSSCTGTPLSSTISSPEDPASSSLAQSVMSMASSQISTDTVSSMSG). Residues 552-561 (PSPRAASRAP) are compositionally biased toward low complexity. The D-box 2 signature appears at 657–660 (ARPR).

In terms of assembly, interacts with APBB1. Interacts with CHD1; CHD1-binding controls RNF157 stability. Also interacts with ATRN, MEGF8, TECR, MSI2, PLRG1, BYSL, MTERF3, PSMA1, MRPS18B, PRPF4, FASTKD2, SLC25A1, SMU1, CNOT9, MRPS2, MAGT1, FXR2, EMD, PSMD8, HDAC1, RAN, HSD17B12, TXNDC5 and MRPL19.

It localises to the cytoplasm. The catalysed reaction is S-ubiquitinyl-[E2 ubiquitin-conjugating enzyme]-L-cysteine + [acceptor protein]-L-lysine = [E2 ubiquitin-conjugating enzyme]-L-cysteine + N(6)-ubiquitinyl-[acceptor protein]-L-lysine.. Functionally, E3 ubiquitin ligase that ubiquitinates APBB1 for its degradation by the proteasome and thus prevents apoptosis and promotes survival of neurons. Has a dual role in neurons as it is also required for dendrite growth and maintenance for which its ligase activity is not critical. May act as a scaffold molecule to regulate this process. Acts as a downstream effector of the interconnected PI3K and MAPK signaling pathways and thus participates in the regulation of the cell cycle. The protein is E3 ubiquitin ligase Rnf157 (Rnf157) of Mus musculus (Mouse).